Here is a 299-residue protein sequence, read N- to C-terminus: Probable lipid kinase YegS-like (299 aa).

One can recognise a DAGKc domain in the interval 2-133; sequence ATYPESLLIL…VDIAQVNDKT (132 aa). ATP-binding positions include Thr-40, 66–72, and Thr-95; that span reads GDGTINE. Residues Leu-215, Asp-218, and Leu-220 each contribute to the Mg(2+) site. Catalysis depends on Glu-271, which acts as the Proton acceptor.

Belongs to the diacylglycerol/lipid kinase family. YegS lipid kinase subfamily. It depends on Mg(2+) as a cofactor. Ca(2+) serves as cofactor.

It localises to the cytoplasm. Functionally, probably phosphorylates lipids; the in vivo substrate is unknown. The chain is Probable lipid kinase YegS-like from Enterobacter sp. (strain 638).